The primary structure comprises 115 residues: uncharacterized protein (115 aa).

Residues 1–86 (RRPARSGGDG…LSSQLVRPSR (86 aa)) are disordered.

This is an uncharacterized protein from Homo sapiens (Human).